The sequence spans 211 residues: Protein-L-isoaspartate O-methyltransferase (211 aa).

Residue S62 is part of the active site.

This sequence belongs to the methyltransferase superfamily. L-isoaspartyl/D-aspartyl protein methyltransferase family.

The protein resides in the cytoplasm. The catalysed reaction is [protein]-L-isoaspartate + S-adenosyl-L-methionine = [protein]-L-isoaspartate alpha-methyl ester + S-adenosyl-L-homocysteine. Catalyzes the methyl esterification of L-isoaspartyl residues in peptides and proteins that result from spontaneous decomposition of normal L-aspartyl and L-asparaginyl residues. It plays a role in the repair and/or degradation of damaged proteins. This Shewanella baltica (strain OS223) protein is Protein-L-isoaspartate O-methyltransferase.